Consider the following 401-residue polypeptide: Tumor necrosis factor receptor superfamily member 11B (401 aa).

The signal sequence occupies residues 1 to 21; the sequence is MNKWLCCALLVLLDIIEWTTQ. TNFR-Cys repeat units lie at residues 24–62, 65–105, 107–142, and 145–185; these read LPPK…KTLC, CPDH…NRVC, CEEG…NTVC, and CPDG…DNVC. 8 disulfides stabilise this stretch: Cys-41–Cys-54, Cys-44–Cys-62, Cys-65–Cys-80, Cys-83–Cys-97, Cys-87–Cys-105, Cys-107–Cys-118, Cys-124–Cys-142, and Cys-145–Cys-160. Asn-98 is a glycosylation site (N-linked (GlcNAc...) asparagine). N-linked (GlcNAc...) asparagine glycans are attached at residues Asn-165 and Asn-178. Cys-166 and Cys-185 are joined by a disulfide. Death domains follow at residues 198–269 and 283–365; these read DVTL…MVKK and RHLG…THSL. The N-linked (GlcNAc...) asparagine glycan is linked to Asn-289.

As to quaternary structure, homodimer. Interacts with TNFSF10 and TNFSF11. In terms of tissue distribution, highly expressed in liver, lung, stomach, intestines and calvaria. Highly expressed in decidua and placenta, and in embryo.

It localises to the secreted. Functionally, acts as a decoy receptor for TNFSF11/RANKL and thereby neutralizes its function in osteoclastogenesis. Inhibits the activation of osteoclasts and promotes osteoclast apoptosis in vitro. Bone homeostasis seems to depend on the local ratio between TNFSF11 and TNFRSF11B. May also play a role in preventing arterial calcification. May act as decoy receptor for TNFSF10/TRAIL and protect against apoptosis. TNFSF10/TRAIL binding blocks the inhibition of osteoclastogenesis. In Mus musculus (Mouse), this protein is Tumor necrosis factor receptor superfamily member 11B (Tnfrsf11b).